A 372-amino-acid polypeptide reads, in one-letter code: Probable arabinan endo-1,5-alpha-L-arabinosidase B (372 aa).

The first 16 residues, 1–16, serve as a signal peptide directing secretion; the sequence is MTVLVALFCLVTWTLC. The span at 23–34 shows a compositional bias: low complexity; sequence STQGTQQPQQPE. The tract at residues 23–52 is disordered; the sequence is STQGTQQPQQPEKTPHPHPQPEDAFPPTHA. The Proton acceptor role is filled by Asp-59. Asn-120 is a glycosylation site (N-linked (GlcNAc...) asparagine). Glu-252 functions as the Proton donor in the catalytic mechanism. N-linked (GlcNAc...) asparagine glycosylation is present at Asn-363.

Belongs to the glycosyl hydrolase 43 family.

The protein localises to the secreted. The enzyme catalyses Endohydrolysis of (1-&gt;5)-alpha-arabinofuranosidic linkages in (1-&gt;5)-arabinans.. The protein operates within glycan metabolism; L-arabinan degradation. Functionally, endo-1,5-alpha-L-arabinanase involved in degradation of pectin. Its preferred substrate is linear 1,5-alpha-L-arabinan. The polypeptide is Probable arabinan endo-1,5-alpha-L-arabinosidase B (abnB) (Aspergillus fumigatus (strain CBS 144.89 / FGSC A1163 / CEA10) (Neosartorya fumigata)).